Consider the following 238-residue polypeptide: SH2 domain-containing adapter protein F (238 aa).

2 disordered regions span residues 1-70 (MEPY…PWEW) and 85-121 (GSEN…EPSS). Phosphoserine is present on Ser39. Positions 55-66 (EDDERPPEEYDQ) are enriched in acidic residues. The residue at position 64 (Tyr64) is a Phosphotyrosine. Positions 138-233 (WYHGAISRTD…AEHMSLLYPV (96 aa)) constitute an SH2 domain.

In terms of assembly, interacts with phosphorylated 'Tyr-720' of PDGFRA via its SH2 domain. Post-translationally, may become phosphorylated upon binding to PDGFRA.

In terms of biological role, adapter protein which may play a role in the regulation of apoptosis in response to PDGF. The sequence is that of SH2 domain-containing adapter protein F from Mus musculus (Mouse).